Here is a 369-residue protein sequence, read N- to C-terminus: Gibberellin 3-beta-dioxygenase 2-3 (369 aa).

One can recognise a Fe2OG dioxygenase domain in the interval 205–306 (MTATMHLNWY…RISLGYFLGP (102 aa)). 3 residues coordinate Fe cation: histidine 229, aspartate 231, and histidine 287. Arginine 297 is an active-site residue.

It belongs to the iron/ascorbate-dependent oxidoreductase family. GA3OX subfamily. Requires L-ascorbate as cofactor. Fe cation is required as a cofactor.

It carries out the reaction gibberellin A20 + 2-oxoglutarate + O2 = gibberellin A1 + succinate + CO2. Converts the inactive gibberellin precursors GA9 and GA20 in the bioactives gibberellins GA4 and GA1. The protein is Gibberellin 3-beta-dioxygenase 2-3 (GA3ox2-3) of Triticum aestivum (Wheat).